The sequence spans 226 residues: Thymidylate kinase (226 aa).

Residue 20-27 participates in ATP binding; that stretch reads GGEGAGKS.

Belongs to the thymidylate kinase family.

It carries out the reaction dTMP + ATP = dTDP + ADP. Its function is as follows. Phosphorylation of dTMP to form dTDP in both de novo and salvage pathways of dTTP synthesis. This is Thymidylate kinase from Bradyrhizobium sp. (strain ORS 278).